The following is a 146-amino-acid chain: Large ribosomal subunit protein uL15 (146 aa).

Residues 1-56 (MKLHELKAAEGANKASKRVGRGTGSGLGKTSGKGQNGQNSRSGGGVRPGFEGGQMP) form a disordered region. 2 stretches are compositionally biased toward gly residues: residues 21–35 (RGTG…GKGQ) and 42–52 (SGGGVRPGFEG).

Belongs to the universal ribosomal protein uL15 family. In terms of assembly, part of the 50S ribosomal subunit.

Binds to the 23S rRNA. In Clostridium botulinum (strain Langeland / NCTC 10281 / Type F), this protein is Large ribosomal subunit protein uL15.